Reading from the N-terminus, the 117-residue chain is Large ribosomal subunit protein bL19 (117 aa).

This sequence belongs to the bacterial ribosomal protein bL19 family.

Its function is as follows. This protein is located at the 30S-50S ribosomal subunit interface and may play a role in the structure and function of the aminoacyl-tRNA binding site. The chain is Large ribosomal subunit protein bL19 from Exiguobacterium sp. (strain ATCC BAA-1283 / AT1b).